The chain runs to 408 residues: LL-diaminopimelate aminotransferase (408 aa).

2 residues coordinate substrate: Y15 and G42. Residues Y72, 108–109 (SK), Y132, N187, Y218, and 246–248 (SFS) contribute to the pyridoxal 5'-phosphate site. Positions 109, 132, and 187 each coordinate substrate. Position 249 is an N6-(pyridoxal phosphate)lysine (K249). Pyridoxal 5'-phosphate-binding residues include R257 and N292. Residues N292 and R388 each contribute to the substrate site.

Belongs to the class-I pyridoxal-phosphate-dependent aminotransferase family. LL-diaminopimelate aminotransferase subfamily. Homodimer. The cofactor is pyridoxal 5'-phosphate.

It catalyses the reaction (2S,6S)-2,6-diaminopimelate + 2-oxoglutarate = (S)-2,3,4,5-tetrahydrodipicolinate + L-glutamate + H2O + H(+). Its pathway is amino-acid biosynthesis; L-lysine biosynthesis via DAP pathway; LL-2,6-diaminopimelate from (S)-tetrahydrodipicolinate (aminotransferase route): step 1/1. Involved in the synthesis of meso-diaminopimelate (m-DAP or DL-DAP), required for both lysine and peptidoglycan biosynthesis. Catalyzes the direct conversion of tetrahydrodipicolinate to LL-diaminopimelate. The sequence is that of LL-diaminopimelate aminotransferase from Leptospira borgpetersenii serovar Hardjo-bovis (strain JB197).